Reading from the N-terminus, the 474-residue chain is 3-isopropylmalate dehydratase large subunit (474 aa).

3 residues coordinate [4Fe-4S] cluster: cysteine 355, cysteine 415, and cysteine 418.

This sequence belongs to the aconitase/IPM isomerase family. LeuC type 1 subfamily. In terms of assembly, heterodimer of LeuC and LeuD. The cofactor is [4Fe-4S] cluster.

It carries out the reaction (2R,3S)-3-isopropylmalate = (2S)-2-isopropylmalate. The protein operates within amino-acid biosynthesis; L-leucine biosynthesis; L-leucine from 3-methyl-2-oxobutanoate: step 2/4. Functionally, catalyzes the isomerization between 2-isopropylmalate and 3-isopropylmalate, via the formation of 2-isopropylmaleate. This is 3-isopropylmalate dehydratase large subunit from Shewanella oneidensis (strain ATCC 700550 / JCM 31522 / CIP 106686 / LMG 19005 / NCIMB 14063 / MR-1).